Here is a 419-residue protein sequence, read N- to C-terminus: Probable serine/threonine-protein kinase CST (419 aa).

The N-myristoyl glycine moiety is linked to residue Gly2. Cys4 carries the S-palmitoyl cysteine lipid modification. Positions 8–48 (FSSSSPSKTGLHSHATTNNHSNGTEFSSTTGATTNSSVGQQ) are disordered. Over residues 15–48 (KTGLHSHATTNNHSNGTEFSSTTGATTNSSVGQQ) the composition is skewed to polar residues. Positions 86 to 368 (FKPDSMLGQG…KEVVEVLEHI (283 aa)) constitute a Protein kinase domain. 92 to 100 (LGQGGFGKV) provides a ligand contact to ATP. Ser117 is modified (phosphoserine). Residue Lys124 participates in ATP binding. Tyr169 carries the post-translational modification Phosphotyrosine. Residue Asp218 is the Proton acceptor of the active site. Ser222 is modified (phosphoserine). Phosphothreonine is present on residues Thr253 and Thr258. At Tyr266 the chain carries Phosphotyrosine. Residues 378-390 (SSTKQAVANSSRS) are compositionally biased toward polar residues. A disordered region spans residues 378–419 (SSTKQAVANSSRSSPHHYRYKAGALGAERKRATPGRFGSVEK).

The protein belongs to the protein kinase superfamily. Ser/Thr protein kinase family. Interacts with SOBIR1/EVR and RLK5/HAE. In terms of processing, autophosphorylated on serine, threonine and tyrosine residues.

The protein localises to the cell membrane. It localises to the nucleus. The catalysed reaction is L-seryl-[protein] + ATP = O-phospho-L-seryl-[protein] + ADP + H(+). It carries out the reaction L-threonyl-[protein] + ATP = O-phospho-L-threonyl-[protein] + ADP + H(+). In terms of biological role, acts as a spatial inhibitor of signaling that modulates abscission zone cell adhesion and expansion. Acts both directly and indirectly by physically interacting with RLK5/HAE and SOBIR1/EVR at the cell surface. In Arabidopsis thaliana (Mouse-ear cress), this protein is Probable serine/threonine-protein kinase CST.